Consider the following 509-residue polypeptide: Protein disulfide-isomerase (509 aa).

Positions 1–19 (MLSRALLCLALAWAARVGA) are cleaved as a signal peptide. Positions 20–136 (DALEEEDNVL…IVNWLKKRTG (117 aa)) constitute a Thioredoxin 1 domain. Catalysis depends on nucleophile residues Cys55 and Cys58. A disulfide bridge links Cys55 with Cys58. Lys202 carries the N6-acetyllysine modification. N6-succinyllysine occurs at positions 224 and 273. Phosphoserine is present on residues Ser333 and Ser359. One can recognise a Thioredoxin 2 domain in the interval 335–477 (ELTAEKITQF…FKKFLESGGQ (143 aa)). Residues Cys399 and Cys402 each act as nucleophile in the active site. Cys399 and Cys402 are joined by a disulfide. Ser429 is modified (phosphoserine). The short motif at 506-509 (KDEL) is the Prevents secretion from ER element.

It belongs to the protein disulfide isomerase family. As to quaternary structure, heterodimer; heterodimerizes with the protein microsomal triglyceride transfer MTTP. Homodimer. Monomers and homotetramers may also occur. Interacts with P4HA2, forming a heterotetramer consisting of 2 alpha subunits (P4HA2) and 2 beta (P4HB), where P4HB plays the role of a structural subunit; this tetramer catalyzes the formation of 4-hydroxyproline in collagen. Also constitutes the structural subunit of the microsomal triacylglycerol transfer protein MTTP in mammalian cells. Stabilizes both enzymes and retain them in the ER without contributing to the catalytic activity. Binds UBQLN1. Interacts with ERO1B. Interacts with ILDR2. Interacts with ERN1/IRE1A (via N-terminus); the interaction is enhanced by phosphorylation of P4HB by FAM20C in response to endoplasmic reticulum stress and results in attenuation of ERN1 activity. Post-translationally, phosphorylation of Ser-359 by FAM20C is induced by endoplasmic reticulum stress and results in a functional switch from oxidoreductase to molecular chaperone. It also promotes interaction with ERN1.

It is found in the endoplasmic reticulum. The protein localises to the endoplasmic reticulum lumen. Its subcellular location is the melanosome. The protein resides in the cell membrane. The enzyme catalyses Catalyzes the rearrangement of -S-S- bonds in proteins.. Functionally, this multifunctional protein catalyzes the formation, breakage and rearrangement of disulfide bonds. At the cell surface, seems to act as a reductase that cleaves disulfide bonds of proteins attached to the cell. May therefore cause structural modifications of exofacial proteins. Inside the cell, seems to form/rearrange disulfide bonds of nascent proteins. At high concentrations and following phosphorylation by FAM20C, functions as a chaperone that inhibits aggregation of misfolded proteins. At low concentrations, facilitates aggregation (anti-chaperone activity). May be involved with other chaperones in the structural modification of the TG precursor in hormone biogenesis. Also acts as a structural subunit of various enzymes such as prolyl 4-hydroxylase and microsomal triacylglycerol transfer protein MTTP. Receptor for LGALS9; the interaction retains P4HB at the cell surface of Th2 T helper cells, increasing disulfide reductase activity at the plasma membrane, altering the plasma membrane redox state and enhancing cell migration. The polypeptide is Protein disulfide-isomerase (P4hb) (Rattus norvegicus (Rat)).